A 3131-amino-acid chain; its full sequence is Enniatin synthase (3131 aa).

The segment at 53 to 466 (ADDKQRAVGH…VEKVDMMTQE (414 aa)) is condensation 1. Positions 186-212 (NDEHPRQFETPDSSQATPEEDLQPNPS) are disordered. Positions 495–887 (SQSPNKAAVA…GRMDSQVKIR (393 aa)) are adenylation 1. One can recognise a Carrier 1 domain in the interval 1010-1086 (SSGTDTYTKL…GLKAIVIGTS (77 aa)). An O-(pantetheine 4'-phosphoryl)serine modification is found at Ser-1047. Positions 1105–1534 (SYAQNRMWFL…ETCISVLPLT (430 aa)) are condensation 2. Residues 1563-1960 (FREQAAANPE…GRMDNQFKIR (398 aa)) are adenylation 2. The segment at 2021–2177 (EGWQDHFESG…YLAEVIDGLI (157 aa)) is S-adenosyl-L-methionine-dependent N-methyltransferase. 2 consecutive Carrier domains span residues 2504–2578 (FPIS…RQGL) and 2598–2671 (APRT…ESSH). Ser-2538 and Ser-2632 each carry O-(pantetheine 4'-phosphoryl)serine. A condensation 3 region spans residues 2718 to 3123 (QDVYPSTQMQ…RHVLEEVCKT (406 aa)).

This sequence belongs to the ATP-dependent AMP-binding enzyme family. The cofactor is pantetheine 4'-phosphate. In terms of processing, the N-terminus is blocked.

It functions in the pathway antibiotic biosynthesis; enniatin biosynthesis. The N-methylation activity is inhibited by S-adenosyl-L-homocysteine and sinefugin. In terms of biological role, nonribosomal peptide synthetase that synthesizes enniatin by coupling three D-hydroxycarboxylic acids and three L-amino acids via amide and ester bonds in an alternating fashion. Whereas ESYN1 can accept different amino acids as precursors (L -valine, L-isoleucine or L-leucine), only one species of D-hydroxycarboxylic acid can be found in natural enniatin isolates (D-hydroxyisovaleric acid, D-Hiv). D-Hiv stems from L-valine deanimation by a valine aminotransferase to 2-keto-isovaleric acid (2-Kiv), which becomes subsequently reduced by a keto-isovaleric acid reductase (KivR) to D-Hiv. Peptide bond formation and N-methylation of the amino acid occur before three enzyme-bound dipeptidols are condensed to a hexapeptidol. In Fusarium equiseti (Fusarium scirpi), this protein is Enniatin synthase.